A 410-amino-acid polypeptide reads, in one-letter code: Putative formamidase C869.04 (410 aa).

The protein belongs to the acetamidase/formamidase family. Homotrimer.

The protein localises to the cytoplasm. It is found in the nucleus. The catalysed reaction is formamide + H2O = formate + NH4(+). In terms of biological role, hydrolyzes formamide with the production of ammonia which can be used as a source of nitrogen for growth. May also act on acetamide, propanamide and butanamide. This Schizosaccharomyces pombe (strain 972 / ATCC 24843) (Fission yeast) protein is Putative formamidase C869.04.